Here is a 458-residue protein sequence, read N- to C-terminus: Sugar transporter ERD6-like 10 (458 aa).

12 helical membrane-spanning segments follow: residues 17–37, 66–86, 96–116, 119–139, 150–170, 174–194, 257–277, 292–312, 319–339, 350–370, 393–413, and 419–439; these read ITACVILSTFVAVCSSFSYGC, FLNLGGAVGALFSGQLAVILG, LFCIFGWLSIAFAKNVLWLDL, ISLGIGVGLTSYVVPVYIAEI, ASTLLLQNSGISLIYFFGTVI, VLAVIGALPCFIPVIGIYFIP, LVVGIGLMLIQQLSGASGITY, LGSMIFGVFVIPKALVGLILV, PLLLASAVGMSIGSLLIGVSF, FIPVFVFINILVYFGFFAIGI, IVALTSWTTGWFVSYGFNFMF, and GTFYIFAMVGGLSLLFIWMLV.

It belongs to the major facilitator superfamily. Sugar transporter (TC 2.A.1.1) family.

The protein resides in the membrane. Its function is as follows. Sugar transporter. The protein is Sugar transporter ERD6-like 10 of Arabidopsis thaliana (Mouse-ear cress).